The chain runs to 397 residues: tRNA-specific 2-thiouridylase MnmA (397 aa).

ATP-binding positions include 19-26 and L45; that span reads AMSGGVDS. The Nucleophile role is filled by C113. C113 and C210 are disulfide-bonded. Residue G137 coordinates ATP. An interaction with tRNA region spans residues 160-162; it reads RDQ. Residue C210 is the Cysteine persulfide intermediate of the active site.

The protein belongs to the MnmA/TRMU family.

The protein localises to the cytoplasm. The catalysed reaction is S-sulfanyl-L-cysteinyl-[protein] + uridine(34) in tRNA + AH2 + ATP = 2-thiouridine(34) in tRNA + L-cysteinyl-[protein] + A + AMP + diphosphate + H(+). In terms of biological role, catalyzes the 2-thiolation of uridine at the wobble position (U34) of tRNA, leading to the formation of s(2)U34. The protein is tRNA-specific 2-thiouridylase MnmA of Bradyrhizobium sp. (strain ORS 278).